A 468-amino-acid polypeptide reads, in one-letter code: Secreted triacylglycerol lipase LIP2 (468 aa).

Residues 1–22 (MFGFRLFILAAVALAYIQCAAA) form the signal peptide. A disulfide bond links C125 and C295. S209 functions as the Nucleophile in the catalytic mechanism. N-linked (GlcNAc...) asparagine glycans are attached at residues N242, N252, and N279. Residues D355 and H389 contribute to the active site.

It belongs to the AB hydrolase superfamily. Lipase family. Class Lip subfamily.

The protein resides in the secreted. The catalysed reaction is a triacylglycerol + H2O = a diacylglycerol + a fatty acid + H(+). It carries out the reaction a monoacylglycerol + H2O = glycerol + a fatty acid + H(+). It catalyses the reaction a diacylglycerol + H2O = a monoacylglycerol + a fatty acid + H(+). Its function is as follows. Secreted lipase that hydrolyzes acylglycerol lipids such as triacylglycerols and consequently releases free fatty acid. Due to an absence of fatty acid synthase genes in Malassezia species, secretory lipases are essential for the yeast to generate free fatty acids from degradation of sebum and assimilate them as lipid sources for growth. Plays important roles not only in lipid metabolism but also in the immune response of host cells and pathogenesis. The sequence is that of Secreted triacylglycerol lipase LIP2 from Malassezia furfur (Pityriasis versicolor infection agent).